The chain runs to 420 residues: Tyrosine--tRNA ligase (420 aa).

Tyrosine 33 is an L-tyrosine binding site. A 'HIGH' region motif is present at residues 38 to 47 (PTADSLHVGH). 2 residues coordinate L-tyrosine: tyrosine 167 and glutamine 171. A 'KMSKS' region motif is present at residues 227 to 231 (KFGKT). Lysine 230 is a binding site for ATP. The 67-residue stretch at 353-419 (LTVADLLVKV…GKRNYALVKV (67 aa)) folds into the S4 RNA-binding domain.

It belongs to the class-I aminoacyl-tRNA synthetase family. TyrS type 1 subfamily. As to quaternary structure, homodimer.

Its subcellular location is the cytoplasm. The enzyme catalyses tRNA(Tyr) + L-tyrosine + ATP = L-tyrosyl-tRNA(Tyr) + AMP + diphosphate + H(+). Its function is as follows. Catalyzes the attachment of tyrosine to tRNA(Tyr) in a two-step reaction: tyrosine is first activated by ATP to form Tyr-AMP and then transferred to the acceptor end of tRNA(Tyr). The polypeptide is Tyrosine--tRNA ligase (Anaeromyxobacter dehalogenans (strain 2CP-C)).